A 426-amino-acid polypeptide reads, in one-letter code: Serine--tRNA ligase (426 aa).

Position 233–235 (233–235 (TAE)) interacts with L-serine. 264-266 (RAE) is a binding site for ATP. Residue glutamate 287 coordinates L-serine. 351-354 (EISS) is a binding site for ATP. L-serine is bound at residue serine 387.

It belongs to the class-II aminoacyl-tRNA synthetase family. Type-1 seryl-tRNA synthetase subfamily. As to quaternary structure, homodimer. The tRNA molecule binds across the dimer.

It is found in the cytoplasm. It carries out the reaction tRNA(Ser) + L-serine + ATP = L-seryl-tRNA(Ser) + AMP + diphosphate + H(+). The enzyme catalyses tRNA(Sec) + L-serine + ATP = L-seryl-tRNA(Sec) + AMP + diphosphate + H(+). It participates in aminoacyl-tRNA biosynthesis; selenocysteinyl-tRNA(Sec) biosynthesis; L-seryl-tRNA(Sec) from L-serine and tRNA(Sec): step 1/1. Its function is as follows. Catalyzes the attachment of serine to tRNA(Ser). Is also able to aminoacylate tRNA(Sec) with serine, to form the misacylated tRNA L-seryl-tRNA(Sec), which will be further converted into selenocysteinyl-tRNA(Sec). The sequence is that of Serine--tRNA ligase from Clostridium kluyveri (strain NBRC 12016).